Reading from the N-terminus, the 217-residue chain is Pyridoxine/pyridoxamine 5'-phosphate oxidase (217 aa).

Substrate-binding positions include Arg-13–Tyr-16 and Lys-71. FMN contacts are provided by residues Arg-66–Lys-71, Tyr-81–Thr-82, Arg-87, Lys-88, and Gln-110. Substrate is bound by residues Tyr-128, Arg-132, and Ser-136. Residues Gln-145–Ser-146 and Trp-190 each bind FMN. Arg-196–His-198 is a substrate binding site. Residue Arg-200 participates in FMN binding.

Belongs to the pyridoxamine 5'-phosphate oxidase family. As to quaternary structure, homodimer. FMN serves as cofactor.

The enzyme catalyses pyridoxamine 5'-phosphate + O2 + H2O = pyridoxal 5'-phosphate + H2O2 + NH4(+). It catalyses the reaction pyridoxine 5'-phosphate + O2 = pyridoxal 5'-phosphate + H2O2. It participates in cofactor metabolism; pyridoxal 5'-phosphate salvage; pyridoxal 5'-phosphate from pyridoxamine 5'-phosphate: step 1/1. It functions in the pathway cofactor metabolism; pyridoxal 5'-phosphate salvage; pyridoxal 5'-phosphate from pyridoxine 5'-phosphate: step 1/1. Functionally, catalyzes the oxidation of either pyridoxine 5'-phosphate (PNP) or pyridoxamine 5'-phosphate (PMP) into pyridoxal 5'-phosphate (PLP). The polypeptide is Pyridoxine/pyridoxamine 5'-phosphate oxidase (Yersinia pestis bv. Antiqua (strain Antiqua)).